Here is a 1114-residue protein sequence, read N- to C-terminus: MEDFDLVENLQKTSPSVESDIKSAPQSLGLSLHANRSSPHLSTNGVSSFSGKTGPPVIQGTVEVLTALRQDLQNSGRTDSELWKSCERIQEEIRKLVKLQLSHASRPSCSSSSVSEQVSAETQMGFFSENSERNESVVSSPASKEPETQPASSTSYPDCHVDSSSVSSGYGTFCILDMNTHKAKEPTEPLEPGAASQGQHPASVVQAHGPAGGAAAINFFTQTPEELCASLKEDGSTFPGEFDRNFLGENKISEVYSGKANSGKSVTSWAQRLKQNQSKQAHTEDDCSGPKPGSELNWKPPADTFDLAADAARPCAFYINKPAESPSSWLSDSGTGLTYWKLEEKDMYHSLPETLEKTFAPSPAERPLSQVLTLDPGAIRMKPKEHVAGIQAHGFLHALDDRISFSPDSVLEPSLSRHSDTDSSSQASHNPSQVSGFSKYPSTTRASPVDTWKNHAFQRESRTSSTIPSRYTITSNDISVKTVDEENTVTVASVSQSQLPGTANSVPECISLASLEDPVMLSKIRQNLKEKHARHVADLRAYYESEISSLKQKLEAKDISAVEEWKKKNEILADRCGQLDSALNEATSRVRTLEKNNNLLEIEVSDLRERFNAASSASKVLQERIEEMRTSNKEKDNTITRLKCRLQDLEEAFENAYKLSDDKEARLRQENKMFQDLLGEYESLGKEHGRVKDTLNTTENKLLDAHTQISDLKRTISKLEAQVKQAEHESMLSLRNGAKVPERPSRSNSVATSDVSRRKWLIPGAEYSIFTGQPLDPRDRKLDKQLEEALVPGYHSPPEKDSSLGSSPASLLVKKKRDTPDTPPIIKALKELDEERVFKSWGTQTEKEDSSSKLVNSRQTEPSVNTGRSPEKCAQQRPKRQTSASQRSSSLPPSSRKANTPTKREIMLTPVTVAYSPKRSPKENLSPGFSHLLSKNESSPVRFDILLDDLDTVPVSTLQQTTAKKQLQFLLDDSEEKKYSEKNSDDPVNPSSCPEHSPNGLKKVSTRQAWEKSKSVSLEQCQPGSAAPQDNGFEYTAKIRTLAETERFFDELTKEKDQIEAALSRMPSPGGRITLQTRLNQEALEDRLEKINRELGSVRMTLKKFHVLRSSANL.

5 disordered regions span residues 1-55, 106-161, 183-207, 267-301, and 410-468; these read MEDF…KTGP, RPSC…DCHV, AKEPTEPLEPGAASQGQHPASVVQA, TSWAQRLKQNQSKQAHTEDDCSGPKPGSELNWKPP, and VLEP…STIP. Over residues 24–51 the composition is skewed to polar residues; it reads APQSLGLSLHANRSSPHLSTNGVSSFSG. The span at 106–119 shows a compositional bias: low complexity; sequence RPSCSSSSVSEQVS. Residues 149 to 161 are compositionally biased toward polar residues; that stretch reads QPASSTSYPDCHV. Polar residues-rich tracts occupy residues 267-280 and 429-446; these read TSWAQRLKQNQSKQ and HNPSQVSGFSKYPSTTRA. Positions 368–729 are required for its centrosomal localization; that stretch reads LSQVLTLDPG…EAQVKQAEHE (362 aa). An interaction with CEP97 region spans residues 382 to 431; the sequence is KPKEHVAGIQAHGFLHALDDRISFSPDSVLEPSLSRHSDTDSSSQASHNP. Positions 574 to 733 form a coiled coil; that stretch reads DRCGQLDSAL…KQAEHESMLS (160 aa). Ser-710 carries the post-translational modification Phosphoserine; by TTBK2. Lys-713 is covalently cross-linked (Glycyl lysine isopeptide (Lys-Gly) (interchain with G-Cter in ubiquitin)). At Ser-717 the chain carries Phosphoserine; by TTBK2. Disordered stretches follow at residues 727-755, 840-931, and 975-1002; these read EHESMLSLRNGAKVPERPSRSNSVATSDV, SWGT…GFSH, and EEKKYSEKNSDDPVNPSSCPEHSPNGLK. The segment at 730–963 is interaction with KIF24; that stretch reads SMLSLRNGAK…PVSTLQQTTA (234 aa). Residues 852–868 show a composition bias toward polar residues; that stretch reads SKLVNSRQTEPSVNTGR. The span at 881–898 shows a compositional bias: low complexity; the sequence is QTSASQRSSSLPPSSRKA. A Phosphoserine modification is found at Ser-926. Residues 975 to 985 are compositionally biased toward basic and acidic residues; the sequence is EEKKYSEKNSD. Residues 1040-1105 adopt a coiled-coil conformation; that stretch reads RTLAETERFF…GSVRMTLKKF (66 aa).

In terms of assembly, interacts with CCP110, CEP97 and KIF24. TTBK2-mediated phosphorylation at Ser-710 and Ser-717, promotes its ubiquitination at Lys-713 leading to proteasomal degradation, loss of MPHOSPH9 facilitates the removal of the CP110-CEP97 complex from the mother centrioles, promoting the initiation of ciliogenesis. Phosphorylated in M (mitotic) phase. In terms of processing, ubiquitinated at Lys-713, leading to proteasomal degradation.

It localises to the cytoplasm. Its subcellular location is the cytoskeleton. It is found in the microtubule organizing center. The protein resides in the centrosome. The protein localises to the centriole. It localises to the golgi apparatus membrane. Functionally, negatively regulates cilia formation by recruiting the CP110-CEP97 complex (a negative regulator of ciliogenesis) at the distal end of the mother centriole in ciliary cells. At the beginning of cilia formation, MPHOSPH9 undergoes TTBK2-mediated phosphorylation and degradation via the ubiquitin-proteasome system and removes itself and the CP110-CEP97 complex from the distal end of the mother centriole, which subsequently promotes cilia formation. The polypeptide is M-phase phosphoprotein 9 (Mphosph9) (Mus musculus (Mouse)).